The primary structure comprises 745 residues: MQRDYLIRVETESMSDFKRLNGLMIGFVIKGEAHIYDENNMTQCNSGDIFIINHRDLYRFQLQQDGIICYIQFQMKYLADKFDDAHCLYFHLTDATTTKNKHQLRNIMARLVSTHIRHNELSKLTEQQLVIQLLMHMIHYVPRTYHSNQSILNDDKVNQVCDYIELHFHEDLSLSELSEYVGWSESHLSKKFAESLGVGFQHFLNTTRIEHAKLDLTYTDEMITDIALQNGFSSAASFARTFKHITHQTPKQYRGDRPAVTENQQSAQHDYHDRELILLLNDYIEEMNHFIEDIEMMNYKEITFQPTNQQLNQFNHIIQVGYLRNLLNTQYQSQLLTCHHDFQVNEVLAYDVMPYIMKKLNAPFTYDAEISNIFYDIDLCLDFLLDHNFSLTMHLDQYDSRDYIDAFKVFIHHVALHVSHRKDLKFNLYVTTLHTSLIEMIDYFKALFPNGGLYIHLDQATERQLPLLKRLEPHIDHFVFDANSNNAVDFNKMNDDEFKTASQMIINKTNYLIDLMHRHHLKRPLILLNWNTLTGDTFITNGECFRGGIIIEQLLKLSSKVEGIGYWLNYDLHVSHCRNERDYMNSIELFHQYNGKRPVYFTALLFNKLTSNILYSDDTCIVTGTDSNFQILLYDAKHFNPYLALDNQMNMRATEMIHLNINALEEGMYKIKHFTLDKENGALFNLWRKHHTIHGMDKDSIDYVNRMSFPKLEVYDIDMTDTLALNIKMITNGIHLIEVKRYPSS.

The HTH araC/xylS-type domain occupies 158-256; that stretch reads NQVCDYIELH…HQTPKQYRGD (99 aa). 2 DNA-binding regions (H-T-H motif) span residues 175-196 and 223-246; these read SELS…AESL and ITDI…KHIT.

This is an uncharacterized protein from Staphylococcus aureus.